The chain runs to 279 residues: Cyanocobalamin reductase / alkylcobalamin dealkylase (279 aa).

Residues Asp-104, 115–118, 129–131, Cys-149, and Ile-160 contribute to the substrate site; these read ILAQ and YYQ. Residues 239 to 279 form a disordered region; sequence PSEHPSTTSELPLSLLTKPQNSRRARSWLSPSVSPPVSPGP. The segment covering 243–257 has biased composition (low complexity); the sequence is PSTTSELPLSLLTKP. Phosphoserine is present on residues Ser-247, Ser-272, and Ser-276.

Belongs to the MMACHC family. Monomer in the absence of bound substrate. Homodimer; dimerization is triggered by binding to FMN or adenosylcobalamin. Interacts with LMBRD1 and ABCD4; the interaction ensures the transport of cobalamin from the lysosome to the cytoplasm. Forms a multiprotein complex with MMADHC, MTR and MTRR; the interaction with MTR could modulate MMACHC-dependent processing of cobalamin. Heterodimer with MMADHC; the interaction might play a role in the regulation of the balance between AdoCbl and MeCbl synthesis. The cofactor is FAD. FMN serves as cofactor. Detected in liver and kidney (at protein level). Detected in embryos.

The protein localises to the cytoplasm. Its subcellular location is the cytosol. The enzyme catalyses 2 cob(II)alamin-[cyanocobalamin reductase] + 2 hydrogen cyanide + NADP(+) = 2 cyanocob(III)alamin + 2 apo-[cyanocobalamin reductase] + NADPH + H(+). It catalyses the reaction apo-[alkylcobalamin reductase] + an R-cob(III)alamin + glutathione = cob(I)alamin-[alkylcobalamin reductase] + an S-substituted glutathione + H(+). It carries out the reaction apo-[alkylcobalamin reductase] + methylcob(III)alamin + glutathione = S-methyl glutathione + cob(I)alamin-[alkylcobalamin reductase] + H(+). The catalysed reaction is apo-[alkylcobalamin reductase] + adenosylcob(III)alamin + glutathione = S-adenosylglutathione + cob(I)alamin-[alkylcobalamin reductase] + H(+). Functionally, cobalamin (vitamin B12) cytosolic chaperone that catalyzes the reductive decyanation of cyanocob(III)alamin (cyanocobalamin, CNCbl) to yield cob(II)alamin and cyanide, using FAD or FMN as cofactors and NADPH as cosubstrate. Cyanocobalamin constitutes the inactive form of vitamin B12 introduced from the diet, and is converted into the active cofactors methylcobalamin (MeCbl) involved in methionine biosynthesis, and 5'-deoxyadenosylcobalamin (AdoCbl) involved in the TCA cycle. Forms a complex with the lysosomal transporter ABCD4 and its chaperone LMBRD1, to transport cobalamin across the lysosomal membrane into the cytosol. The processing of cobalamin in the cytosol occurs in a multiprotein complex composed of at least MMACHC, MMADHC, MTRR (methionine synthase reductase) and MTR (methionine synthase) which may contribute to shuttle safely and efficiently cobalamin towards MTR in order to produce methionine. Also acts as a glutathione transferase by catalyzing the dealkylation of the alkylcob(III)alamins MeCbl and AdoCbl, using the thiolate of glutathione for nucleophilic displacement to generate cob(I)alamin and the corresponding glutathione thioether. The conversion of incoming MeCbl or AdoCbl into a common intermediate cob(I)alamin is necessary to meet the cellular needs for both cofactors. Cysteine and homocysteine cannot substitute for glutathione in this reaction. The protein is Cyanocobalamin reductase / alkylcobalamin dealkylase of Mus musculus (Mouse).